Reading from the N-terminus, the 834-residue chain is Serine/threonine-protein kinase TNNI3K (834 aa).

A lipid anchor (N-myristoyl glycine) is attached at Gly2. Positions 21–49 form a coiled coil; that stretch reads SESYAIIIERLEDDLQIKENEFQELRHIF. 10 ANK repeats span residues 66–96, 100–129, 133–162, 166–195, 199–229, 233–262, 268–297, 303–334, 338–367, and 380–409; these read RGLSLLHLCCACGGNKSHIRALMLKGLRPSR, NGFPALHLAVYKDSLELITSLLHSGADVQQ, GGLTALHIAAIAGHPEAVEVLLQHGANVNV, VFFTPLHIAAYYGHEQVTSVLLKFGADVNV, VGDRPLHLASAKGFFNIVKLLVEGNKADVNA, EDHVPLHFCSRFGHHNIVSYLLQSDLEVQP, YGDTPLHLACYNGNFEVAKEIVHVTGTESL, FSETAFHSACTYGKNIDLVKFLLDQNAVNINH, DGHTGLHSACYHGHIRLVQFLLDNGADMNL, and DEQTCLMWAYEKGHDAIVTLLKHYKRPQDE. In terms of domain architecture, Protein kinase spans 462–722; that stretch reads IEFHEIIGSG…EVVRKLEECL (261 aa). Residues 468–476 and Lys489 each bind ATP; that span reads IGSGSFGKV. Catalysis depends on Asp587, which acts as the Proton acceptor. Residues 815-834 are disordered; the sequence is PMSPMHLHSRRNSGSFEDGN.

This sequence belongs to the protein kinase superfamily. TKL Ser/Thr protein kinase family. MAP kinase kinase kinase subfamily. As to quaternary structure, interacts with TNNI3, ACTC, ACTA1, MYBPC3, AIP, FABP3 and HADHB. Mg(2+) serves as cofactor. In terms of processing, autophosphorylated.

It localises to the nucleus. It is found in the cytoplasm. The enzyme catalyses L-seryl-[protein] + ATP = O-phospho-L-seryl-[protein] + ADP + H(+). The catalysed reaction is L-threonyl-[protein] + ATP = O-phospho-L-threonyl-[protein] + ADP + H(+). May play a role in cardiac physiology. This Mus musculus (Mouse) protein is Serine/threonine-protein kinase TNNI3K.